Reading from the N-terminus, the 440-residue chain is RUN domain-containing protein 3A (440 aa).

One can recognise an RUN domain in the interval 52 to 184 (DDSSEEFVNF…IDFSFCLKGE (133 aa)). The interval 213 to 233 (DDRESVGGSSSEDSSPEHPYL) is disordered. Residues 262–317 (YLEELVRLRETQLKNLEAENKRLTQRISEQAEQSLQEKHQLEGVILELQEQLTGLL) are a coiled coil. A disordered region spans residues 374–402 (LSSESQRLDGKQDGEPWGPIGKDPTPSML).

It belongs to the RUNDC3 family.

This is RUN domain-containing protein 3A (rundc3a) from Xenopus tropicalis (Western clawed frog).